The chain runs to 241 residues: tRNA pseudouridine synthase A (241 aa).

Aspartate 51 functions as the Nucleophile in the catalytic mechanism. A substrate-binding site is contributed by tyrosine 110.

The protein belongs to the tRNA pseudouridine synthase TruA family. Homodimer.

It carries out the reaction uridine(38/39/40) in tRNA = pseudouridine(38/39/40) in tRNA. In terms of biological role, formation of pseudouridine at positions 38, 39 and 40 in the anticodon stem and loop of transfer RNAs. This Campylobacter jejuni subsp. jejuni serotype O:23/36 (strain 81-176) protein is tRNA pseudouridine synthase A.